The sequence spans 423 residues: MDRIIIEGGNTQLKGEVVIEGAKNAVLPLLAAAILPTEGQTLLKNVPILSDVFTMNNVVRGLNVAVDFDEERNQILVDATGDILDVAPYEYVSQMRASIVVLGPILARNGHAKVSMPGGCTIGSRPIDLHLKGLEAMGAKIQQTGGDITATADRLKGANIYMDFPSVGATQNLMMAATLADGTTIIENAAREPEIVDLANLLNKMGARVIGAGTETLTIIGVDKMHGTDHSVVQDRIEAGTFMVAAAMTNGNVLVKNAVWEHNRPLISKLREMGVQVTEEERGIRVISDVTKLRPVTVKTMPHPGFPTDMQAQFTALMAVVKGESTMIETVFENRFQHLEEMRRMGLTSEILRDTAMIHGGEQLQGAQVMSTDLRASAALILTGMVADGKTTVGKLNHLDRGYYQFHEKLTKLGATISRVNGE.

A phosphoenolpyruvate-binding site is contributed by lysine 23–asparagine 24. Arginine 96 serves as a coordination point for UDP-N-acetyl-alpha-D-glucosamine. The active-site Proton donor is cysteine 120. Residue cysteine 120 is modified to 2-(S-cysteinyl)pyruvic acid O-phosphothioketal. Residues arginine 125–leucine 129, aspartate 309, and valine 331 each bind UDP-N-acetyl-alpha-D-glucosamine.

The protein belongs to the EPSP synthase family. MurA subfamily.

The protein localises to the cytoplasm. The catalysed reaction is phosphoenolpyruvate + UDP-N-acetyl-alpha-D-glucosamine = UDP-N-acetyl-3-O-(1-carboxyvinyl)-alpha-D-glucosamine + phosphate. It participates in cell wall biogenesis; peptidoglycan biosynthesis. Its function is as follows. Cell wall formation. Adds enolpyruvyl to UDP-N-acetylglucosamine. The protein is UDP-N-acetylglucosamine 1-carboxyvinyltransferase 1 of Streptococcus mutans serotype c (strain ATCC 700610 / UA159).